We begin with the raw amino-acid sequence, 493 residues long: High affinity nitrate transporter 2.7 (493 aa).

Residues 1 to 19 are compositionally biased toward polar residues; it reads MEPSQRNTKPPSFSDSTIP. The segment at 1-20 is disordered; it reads MEPSQRNTKPPSFSDSTIPV. 12 helical membrane passes run 46 to 66, 70 to 90, 113 to 133, 136 to 156, 174 to 194, 202 to 222, 257 to 277, 299 to 319, 341 to 361, 368 to 388, 400 to 420, and 431 to 451; these read WLSLFSCFFSTFSIPPLVPVI, LNLSASTVSAAGIASFAGSIF, FLTAPVILSASLVSSPTSFIL, FFVGFSLANFVANQYWMSSMF, VGAGISQLLMPLIYSTIAEFL, VSFVFPAIFQVTTAVLVLLYG, FVEILIGGLGNYRAWILALLY, FGVNLEAAGTIAASFGISNIA, LWGLWIVQSVAGLLCVLLGRV, ILVMWVFSVFVQAASGLVFGV, VAGITGSGGTVGAVVTQFLLF, and ISLMGLMTFVFALSVTSIYFP.

It belongs to the major facilitator superfamily. Nitrate/nitrite porter (TC 2.A.1.8) family. As to expression, expressed in seeds, leaves and shoots. Lower expression in roots.

It is found in the vacuole membrane. Its function is as follows. Involved in high-affinity nitrate transport. Controls nitrate content in seeds. This Arabidopsis thaliana (Mouse-ear cress) protein is High affinity nitrate transporter 2.7 (NRT2.7).